The sequence spans 602 residues: Potassium-transporting ATPase potassium-binding subunit (602 aa).

The next 10 helical transmembrane spans lie at 3-23 (ANNL…AVPV), 64-84 (QYAL…YALL), 135-155 (GLTV…LALI), 178-198 (LYVL…QGVI), 282-302 (FSNF…CLVF), 313-333 (VAVL…ETSA), 418-438 (GLYG…LMIG), 456-476 (VSIV…IAVL), 522-542 (WMTA…VLAI), and 565-585 (LFVV…YMPA).

The protein belongs to the KdpA family. The system is composed of three essential subunits: KdpA, KdpB and KdpC.

It is found in the cell inner membrane. Functionally, part of the high-affinity ATP-driven potassium transport (or Kdp) system, which catalyzes the hydrolysis of ATP coupled with the electrogenic transport of potassium into the cytoplasm. This subunit binds the periplasmic potassium ions and delivers the ions to the membrane domain of KdpB through an intramembrane tunnel. This chain is Potassium-transporting ATPase potassium-binding subunit, found in Burkholderia pseudomallei (strain K96243).